A 393-amino-acid chain; its full sequence is MANDFLFTSESVSEGHPDKVADQISDAILDAIFTQDPRSRVAAETLTNTGLVVLAGEITTNAHVDYIQVARDTIKRIGYDNTEYGIDYKGCAVLVAYDKQSNDIAQGVDHASDDHLNTGAGDQGLMFGYACDETPELMPAPIYYAHRLVERQAQLRKDGRLPFLRPDAKSQVTMRYVDGKPHSIDTVVLSTQHSPDQSETATKMKASFTEAIIEEIIKPVLPKEWLQDTKYLINPTGRFVIGGPQGDCGLTGRKIIVDTYGGACPHGGGAFSGKDPTKVDRSAAYAARYVAKNIVAAGLARQCQIQVAYAIGVARPMNITVYTEGTGVIPDDQIAQLVQEHFDLRPKGIIQMLDLLRPIYAKTAAYGHFGREEPEFTWERTDKAAALRAAAGL.

ATP is bound at residue His16. Residue Asp18 participates in Mg(2+) binding. Glu44 contributes to the K(+) binding site. Residues Glu57 and Gln100 each coordinate L-methionine. The segment at 100–110 is flexible loop; that stretch reads QSNDIAQGVDH. ATP-binding positions include 167-169, 238-239, Asp247, 253-254, Ala270, and Lys274; these read DAK, RF, and RK. Asp247 serves as a coordination point for L-methionine. Lys278 contacts L-methionine.

It belongs to the AdoMet synthase family. In terms of assembly, homotetramer; dimer of dimers. Mg(2+) is required as a cofactor. K(+) serves as cofactor.

The protein localises to the cytoplasm. The catalysed reaction is L-methionine + ATP + H2O = S-adenosyl-L-methionine + phosphate + diphosphate. It functions in the pathway amino-acid biosynthesis; S-adenosyl-L-methionine biosynthesis; S-adenosyl-L-methionine from L-methionine: step 1/1. Functionally, catalyzes the formation of S-adenosylmethionine (AdoMet) from methionine and ATP. The overall synthetic reaction is composed of two sequential steps, AdoMet formation and the subsequent tripolyphosphate hydrolysis which occurs prior to release of AdoMet from the enzyme. In Acidovorax ebreus (strain TPSY) (Diaphorobacter sp. (strain TPSY)), this protein is S-adenosylmethionine synthase.